The following is a 106-amino-acid chain: Large ribosomal subunit protein bL31B (106 aa).

The tract at residues 85 to 106 (PVQVAEEPVAKGKKKPSLKKKK) is disordered. The segment covering 95-106 (KGKKKPSLKKKK) has biased composition (basic residues).

Belongs to the bacterial ribosomal protein bL31 family. Type B subfamily. As to quaternary structure, part of the 50S ribosomal subunit.

This Chlamydia felis (strain Fe/C-56) (Chlamydophila felis) protein is Large ribosomal subunit protein bL31B.